The sequence spans 291 residues: Glycine--tRNA ligase alpha subunit (291 aa).

It belongs to the class-II aminoacyl-tRNA synthetase family. Tetramer of two alpha and two beta subunits.

The protein resides in the cytoplasm. The catalysed reaction is tRNA(Gly) + glycine + ATP = glycyl-tRNA(Gly) + AMP + diphosphate. The protein is Glycine--tRNA ligase alpha subunit of Trichlorobacter lovleyi (strain ATCC BAA-1151 / DSM 17278 / SZ) (Geobacter lovleyi).